The chain runs to 311 residues: Malate dehydrogenase (311 aa).

NAD(+)-binding positions include 7–13 and aspartate 34; that span reads GAAGGIG. Arginine 81 and arginine 87 together coordinate substrate. Residues asparagine 94 and 117–119 contribute to the NAD(+) site; that span reads ITN. Substrate is bound by residues asparagine 119 and arginine 153. Histidine 177 serves as the catalytic Proton acceptor. Methionine 227 is a binding site for NAD(+).

It belongs to the LDH/MDH superfamily. MDH type 1 family. As to quaternary structure, homodimer.

It catalyses the reaction (S)-malate + NAD(+) = oxaloacetate + NADH + H(+). Functionally, catalyzes the reversible oxidation of malate to oxaloacetate. The polypeptide is Malate dehydrogenase (Histophilus somni (strain 129Pt) (Haemophilus somnus)).